Reading from the N-terminus, the 345-residue chain is Methionine import ATP-binding protein MetN (345 aa).

The region spanning 2–241 (IKLNNIXKIF…PKTELAQEFI (240 aa)) is the ABC transporter domain. An ATP-binding site is contributed by 38-45 (GASGAGKS).

This sequence belongs to the ABC transporter superfamily. Methionine importer (TC 3.A.1.24) family. The complex is composed of two ATP-binding proteins (MetN), two transmembrane proteins (MetI) and a solute-binding protein (MetQ).

The protein localises to the cell inner membrane. It carries out the reaction L-methionine(out) + ATP + H2O = L-methionine(in) + ADP + phosphate + H(+). The enzyme catalyses D-methionine(out) + ATP + H2O = D-methionine(in) + ADP + phosphate + H(+). In terms of biological role, part of the ABC transporter complex MetNIQ involved in methionine import. Responsible for energy coupling to the transport system. This is Methionine import ATP-binding protein MetN from Haemophilus influenzae (strain ATCC 51907 / DSM 11121 / KW20 / Rd).